The primary structure comprises 348 residues: Phosphate acyltransferase (348 aa).

Belongs to the PlsX family. In terms of assembly, homodimer. Probably interacts with PlsY.

Its subcellular location is the cytoplasm. The catalysed reaction is a fatty acyl-[ACP] + phosphate = an acyl phosphate + holo-[ACP]. It participates in lipid metabolism; phospholipid metabolism. Functionally, catalyzes the reversible formation of acyl-phosphate (acyl-PO(4)) from acyl-[acyl-carrier-protein] (acyl-ACP). This enzyme utilizes acyl-ACP as fatty acyl donor, but not acyl-CoA. The chain is Phosphate acyltransferase from Francisella tularensis subsp. tularensis (strain FSC 198).